Consider the following 372-residue polypeptide: sn-glycerol-3-phosphate import ATP-binding protein UgpC (372 aa).

Residues 2–233 (LDIQQLVKTY…PASTFVASFI (232 aa)) enclose the ABC transporter domain. 35–42 (GPSGCGKS) contacts ATP.

Belongs to the ABC transporter superfamily. sn-glycerol-3-phosphate importer (TC 3.A.1.1.3) family. The complex is composed of two ATP-binding proteins (UgpC), two transmembrane proteins (UgpA and UgpE) and a solute-binding protein (UgpB).

The protein localises to the cell inner membrane. It catalyses the reaction sn-glycerol 3-phosphate(out) + ATP + H2O = sn-glycerol 3-phosphate(in) + ADP + phosphate + H(+). Part of the ABC transporter complex UgpBAEC involved in sn-glycerol-3-phosphate (G3P) import. Responsible for energy coupling to the transport system. The chain is sn-glycerol-3-phosphate import ATP-binding protein UgpC from Vibrio vulnificus (strain CMCP6).